Consider the following 421-residue polypeptide: Serine hydroxymethyltransferase (421 aa).

(6S)-5,6,7,8-tetrahydrofolate is bound by residues Leu-121 and Gly-125 to Leu-127. Lys-230 carries the N6-(pyridoxal phosphate)lysine modification. Residue Ser-355–Phe-357 coordinates (6S)-5,6,7,8-tetrahydrofolate.

Belongs to the SHMT family. In terms of assembly, homodimer. Requires pyridoxal 5'-phosphate as cofactor.

It localises to the cytoplasm. The catalysed reaction is (6R)-5,10-methylene-5,6,7,8-tetrahydrofolate + glycine + H2O = (6S)-5,6,7,8-tetrahydrofolate + L-serine. Its pathway is one-carbon metabolism; tetrahydrofolate interconversion. It functions in the pathway amino-acid biosynthesis; glycine biosynthesis; glycine from L-serine: step 1/1. In terms of biological role, catalyzes the reversible interconversion of serine and glycine with tetrahydrofolate (THF) serving as the one-carbon carrier. This reaction serves as the major source of one-carbon groups required for the biosynthesis of purines, thymidylate, methionine, and other important biomolecules. Also exhibits THF-independent aldolase activity toward beta-hydroxyamino acids, producing glycine and aldehydes, via a retro-aldol mechanism. This is Serine hydroxymethyltransferase from Psychromonas ingrahamii (strain DSM 17664 / CCUG 51855 / 37).